The sequence spans 591 residues: Aspartate--tRNA ligase (591 aa).

Residue Glu-176 coordinates L-aspartate. The segment at 200 to 203 is aspartate; it reads QILK. Arg-222 contributes to the L-aspartate binding site. ATP is bound by residues 222–224 and Gln-231; that span reads RDE. His-450 provides a ligand contact to L-aspartate. ATP is bound at residue Glu-484. Arg-491 contacts L-aspartate. An ATP-binding site is contributed by 536-539; the sequence is GLDR.

This sequence belongs to the class-II aminoacyl-tRNA synthetase family. Type 1 subfamily. Homodimer.

The protein resides in the cytoplasm. The enzyme catalyses tRNA(Asp) + L-aspartate + ATP = L-aspartyl-tRNA(Asp) + AMP + diphosphate. Functionally, catalyzes the attachment of L-aspartate to tRNA(Asp) in a two-step reaction: L-aspartate is first activated by ATP to form Asp-AMP and then transferred to the acceptor end of tRNA(Asp). This chain is Aspartate--tRNA ligase, found in Listeria welshimeri serovar 6b (strain ATCC 35897 / DSM 20650 / CCUG 15529 / CIP 8149 / NCTC 11857 / SLCC 5334 / V8).